A 146-amino-acid chain; its full sequence is Hemoglobin subunit beta (146 aa).

Residue valine 1 is modified to N-acetylvaline. Residues 2–146 (HLTDAEKAAV…VATALAHKYH (145 aa)) enclose the Globin domain. Serine 44 carries the post-translational modification Phosphoserine. Lysine 59 is modified (N6-acetyllysine). Residue histidine 63 coordinates heme b. Lysine 82 carries the post-translational modification N6-acetyllysine. Histidine 92 is a binding site for heme b. An S-nitrosocysteine modification is found at cysteine 93. The residue at position 144 (lysine 144) is an N6-acetyllysine.

This sequence belongs to the globin family. In terms of assembly, heterotetramer of two alpha chains and two beta chains. In terms of tissue distribution, red blood cells.

Involved in oxygen transport from the lung to the various peripheral tissues. The chain is Hemoglobin subunit beta (HBB) from Spalax ehrenbergi (Middle East blind mole rat).